The following is a 209-amino-acid chain: Probable L-serine dehydratase, alpha chain (209 aa).

It belongs to the iron-sulfur dependent L-serine dehydratase family. Heterodimer of an alpha chain and a beta chain. It depends on [4Fe-4S] cluster as a cofactor.

It carries out the reaction L-serine = pyruvate + NH4(+). It functions in the pathway carbohydrate biosynthesis; gluconeogenesis. The polypeptide is Probable L-serine dehydratase, alpha chain (sdhA) (Latilactobacillus sakei (Lactobacillus sakei)).